Here is a 198-residue protein sequence, read N- to C-terminus: Ribonuclease HII (198 aa).

An RNase H type-2 domain is found at 14–198; sequence GVIAGVDEVG…KNFAPISRAL (185 aa). A divalent metal cation is bound by residues Asp20, Glu21, and Asp112.

Belongs to the RNase HII family. The cofactor is Mn(2+). It depends on Mg(2+) as a cofactor.

It is found in the cytoplasm. It carries out the reaction Endonucleolytic cleavage to 5'-phosphomonoester.. Endonuclease that specifically degrades the RNA of RNA-DNA hybrids. This is Ribonuclease HII from Wolbachia pipientis wMel.